The sequence spans 385 residues: 3-hydroxyisobutyryl-CoA hydrolase, mitochondrial (385 aa).

Substrate contacts are provided by E120, G145, E168, and D176.

The protein belongs to the enoyl-CoA hydratase/isomerase family.

Its subcellular location is the mitochondrion. The enzyme catalyses 3-hydroxy-2-methylpropanoyl-CoA + H2O = 3-hydroxy-2-methylpropanoate + CoA + H(+). It participates in amino-acid degradation; L-valine degradation. In terms of biological role, hydrolyzes 3-hydroxyisobutyryl-CoA (HIBYL-CoA), a saline catabolite. Has high activity toward isobutyryl-CoA. Could be an isobutyryl-CoA dehydrogenase that functions in valine catabolism. Also hydrolyzes 3-hydroxypropanoyl-CoA. This is 3-hydroxyisobutyryl-CoA hydrolase, mitochondrial (HIBCH) from Gallus gallus (Chicken).